Reading from the N-terminus, the 725-residue chain is IML2-like protein SCY_3392 (725 aa).

At T196 the chain carries Phosphothreonine. Residues S246, S377, and S380 each carry the phosphoserine modification.

Belongs to the IML2 family.

It localises to the cytoplasm. The protein resides in the nucleus. May be involved in mitochondrial DNA stability. The sequence is that of IML2-like protein SCY_3392 from Saccharomyces cerevisiae (strain YJM789) (Baker's yeast).